Reading from the N-terminus, the 260-residue chain is Triosephosphate isomerase (260 aa).

11-13 provides a ligand contact to substrate; that stretch reads NWK. The Electrophile role is filled by H103. E175 acts as the Proton acceptor in catalysis. Substrate contacts are provided by residues G181, S220, and 241-242; that span reads GG.

Belongs to the triosephosphate isomerase family. Homodimer.

Its subcellular location is the cytoplasm. The enzyme catalyses D-glyceraldehyde 3-phosphate = dihydroxyacetone phosphate. The protein operates within carbohydrate biosynthesis; gluconeogenesis. Its pathway is carbohydrate degradation; glycolysis; D-glyceraldehyde 3-phosphate from glycerone phosphate: step 1/1. Involved in the gluconeogenesis. Catalyzes stereospecifically the conversion of dihydroxyacetone phosphate (DHAP) to D-glyceraldehyde-3-phosphate (G3P). This chain is Triosephosphate isomerase, found in Shewanella sediminis (strain HAW-EB3).